The chain runs to 87 residues: Small ribosomal subunit protein uS15 (87 aa).

The span at 1–19 shows a compositional bias: basic and acidic residues; it reads MEKARKEQLIREYATHEGD. The tract at residues 1-22 is disordered; the sequence is MEKARKEQLIREYATHEGDTGS.

This sequence belongs to the universal ribosomal protein uS15 family. Part of the 30S ribosomal subunit. Forms a bridge to the 50S subunit in the 70S ribosome, contacting the 23S rRNA.

In terms of biological role, one of the primary rRNA binding proteins, it binds directly to 16S rRNA where it helps nucleate assembly of the platform of the 30S subunit by binding and bridging several RNA helices of the 16S rRNA. Its function is as follows. Forms an intersubunit bridge (bridge B4) with the 23S rRNA of the 50S subunit in the ribosome. The protein is Small ribosomal subunit protein uS15 of Clostridium novyi (strain NT).